We begin with the raw amino-acid sequence, 400 residues long: Cartilage-associated protein (400 aa).

Positions 1-25 are cleaved as a signal peptide; that stretch reads MGPRSPTAALLVLLCVGCAPTPGRG. 2 N-linked (GlcNAc...) asparagine glycosylation sites follow: N86 and N362.

Belongs to the leprecan family. As to expression, found in articular chondrocytes. Expressed in a variety of tissues.

The protein resides in the secreted. It localises to the extracellular space. Its subcellular location is the extracellular matrix. Its function is as follows. Necessary for efficient 3-hydroxylation of fibrillar collagen prolyl residues. The protein is Cartilage-associated protein (Crtap) of Mus musculus (Mouse).